Here is a 490-residue protein sequence, read N- to C-terminus: Glutamyl-tRNA(Gln) amidotransferase subunit A (490 aa).

Residues lysine 81 and serine 156 each act as charge relay system in the active site. The Acyl-ester intermediate role is filled by serine 180.

The protein belongs to the amidase family. GatA subfamily. Heterotrimer of A, B and C subunits.

The catalysed reaction is L-glutamyl-tRNA(Gln) + L-glutamine + ATP + H2O = L-glutaminyl-tRNA(Gln) + L-glutamate + ADP + phosphate + H(+). Functionally, allows the formation of correctly charged Gln-tRNA(Gln) through the transamidation of misacylated Glu-tRNA(Gln) in organisms which lack glutaminyl-tRNA synthetase. The reaction takes place in the presence of glutamine and ATP through an activated gamma-phospho-Glu-tRNA(Gln). The polypeptide is Glutamyl-tRNA(Gln) amidotransferase subunit A (Nocardia farcinica (strain IFM 10152)).